The chain runs to 347 residues: NADH-ubiquinone oxidoreductase chain 2 (347 aa).

The next 10 membrane-spanning stretches (helical) occupy residues 1–21 (MNPL…LIVM), 25–45 (HWFM…PLLT), 67–87 (SMLL…WSIM), 111–131 (FHFW…LILL), 144–164 (MIMP…SIAI), 178–198 (IMAY…AYNP), 201–221 (TLLN…LLMI), 237–257 (LPLI…LPPL), 274–294 (SSII…YFYT), and 326–346 (LPLM…MPIL).

The protein belongs to the complex I subunit 2 family. Core subunit of respiratory chain NADH dehydrogenase (Complex I) which is composed of 45 different subunits. Interacts with TMEM242.

It is found in the mitochondrion inner membrane. The catalysed reaction is a ubiquinone + NADH + 5 H(+)(in) = a ubiquinol + NAD(+) + 4 H(+)(out). Functionally, core subunit of the mitochondrial membrane respiratory chain NADH dehydrogenase (Complex I) which catalyzes electron transfer from NADH through the respiratory chain, using ubiquinone as an electron acceptor. Essential for the catalytic activity and assembly of complex I. The chain is NADH-ubiquinone oxidoreductase chain 2 from Myotis simus (Velvety myotis).